A 488-amino-acid polypeptide reads, in one-letter code: N-succinylglutamate 5-semialdehyde dehydrogenase (488 aa).

NAD(+) is bound at residue 221–226; the sequence is GSSRTG. Active-site residues include glutamate 244 and cysteine 278.

It belongs to the aldehyde dehydrogenase family. AstD subfamily.

It carries out the reaction N-succinyl-L-glutamate 5-semialdehyde + NAD(+) + H2O = N-succinyl-L-glutamate + NADH + 2 H(+). It functions in the pathway amino-acid degradation; L-arginine degradation via AST pathway; L-glutamate and succinate from L-arginine: step 4/5. Functionally, catalyzes the NAD-dependent reduction of succinylglutamate semialdehyde into succinylglutamate. The polypeptide is N-succinylglutamate 5-semialdehyde dehydrogenase (Pseudomonas syringae pv. tomato (strain ATCC BAA-871 / DC3000)).